The primary structure comprises 326 residues: 4-hydroxythreonine-4-phosphate dehydrogenase (326 aa).

Substrate contacts are provided by H132 and T133. Residues H162, H207, and H262 each coordinate a divalent metal cation. K270, N279, and R288 together coordinate substrate.

The protein belongs to the PdxA family. In terms of assembly, homodimer. Zn(2+) serves as cofactor. Requires Mg(2+) as cofactor. It depends on Co(2+) as a cofactor.

It localises to the cytoplasm. It carries out the reaction 4-(phosphooxy)-L-threonine + NAD(+) = 3-amino-2-oxopropyl phosphate + CO2 + NADH. Its pathway is cofactor biosynthesis; pyridoxine 5'-phosphate biosynthesis; pyridoxine 5'-phosphate from D-erythrose 4-phosphate: step 4/5. Its function is as follows. Catalyzes the NAD(P)-dependent oxidation of 4-(phosphooxy)-L-threonine (HTP) into 2-amino-3-oxo-4-(phosphooxy)butyric acid which spontaneously decarboxylates to form 3-amino-2-oxopropyl phosphate (AHAP). This Ruegeria sp. (strain TM1040) (Silicibacter sp.) protein is 4-hydroxythreonine-4-phosphate dehydrogenase.